The following is a 278-amino-acid chain: Undecaprenyl-diphosphatase (278 aa).

Helical transmembrane passes span 49–69, 97–117, 120–140, 197–217, 226–246, and 258–278; these read ANTF…VVFW, HVLI…DFID, LFSI…MIAA, ADFT…LSLV, GDLG…LLSI, and LVPF…IVYM.

The protein belongs to the UppP family.

The protein resides in the cell membrane. The enzyme catalyses di-trans,octa-cis-undecaprenyl diphosphate + H2O = di-trans,octa-cis-undecaprenyl phosphate + phosphate + H(+). Functionally, catalyzes the dephosphorylation of undecaprenyl diphosphate (UPP). Confers resistance to bacitracin. This Exiguobacterium sibiricum (strain DSM 17290 / CCUG 55495 / CIP 109462 / JCM 13490 / 255-15) protein is Undecaprenyl-diphosphatase.